Consider the following 676-residue polypeptide: Long-chain-fatty-acid--CoA ligase 1 (676 aa).

Tyr246–Val257 lines the ATP pocket. The short motif at Asp511 to Leu560 is the FACS element.

Belongs to the ATP-dependent AMP-binding enzyme family. Mg(2+) is required as a cofactor.

The enzyme catalyses a long-chain fatty acid + ATP + CoA = a long-chain fatty acyl-CoA + AMP + diphosphate. Functionally, esterification, concomitant with transport, of exogenous long-chain fatty acids into metabolically active CoA thioesters for subsequent degradation or incorporation into phospholipids. It may supplement intracellular myristoyl-CoA pools from exogenous myristate. Preferentially acts on C12:0-C16:0 fatty acids with myristic and pentadecanic acid (C15:0) having the highest activities. Appears to play a role in the maintenance of cell viability during stationary phase. This Schizosaccharomyces pombe (strain 972 / ATCC 24843) (Fission yeast) protein is Long-chain-fatty-acid--CoA ligase 1 (lcf1).